The primary structure comprises 144 residues: tRNA-specific adenosine deaminase (144 aa).

One can recognise a CMP/dCMP-type deaminase domain in the interval 1 to 116 (MEQALKQAGI…SNLRYFNSSV (116 aa)). Histidine 48 serves as a coordination point for Zn(2+). Glutamate 50 acts as the Proton donor in catalysis. Zn(2+) is bound by residues cysteine 78 and cysteine 81.

Belongs to the cytidine and deoxycytidylate deaminase family. Homodimer. Zn(2+) serves as cofactor.

It carries out the reaction adenosine(34) in tRNA + H2O + H(+) = inosine(34) in tRNA + NH4(+). In terms of biological role, catalyzes the deamination of adenosine to inosine at the wobble position 34 of tRNA(Arg2). The polypeptide is tRNA-specific adenosine deaminase (Rickettsia felis (strain ATCC VR-1525 / URRWXCal2) (Rickettsia azadi)).